Reading from the N-terminus, the 407-residue chain is 45 kDa calcium-binding protein (407 aa).

Positions 1–35 (MVWSWVAMASRWGPLVGLAPRCLWLLGAVLLMDAS) are cleaved as a signal peptide. A glycan (N-linked (GlcNAc...) asparagine) is linked at Asn-40. EF-hand domains lie at 98–133 (RSRR…KTAE) and 137–172 (EAME…SKGH). Phosphoserine is present on Ser-99. 10 residues coordinate Ca(2+): Asp-111, Asn-113, Asp-115, Lys-117, Glu-122, Asp-150, Asp-152, Asp-154, His-156, and Glu-161. A phosphothreonine mark is found at Thr-193 and Thr-217. The span at 249 to 259 (GSSLAGAPGPG) shows a compositional bias: low complexity. A disordered region spans residues 249 to 282 (GSSLAGAPGPGDQRQGPGIAGKSGKVLREPQPGC). Residues Asp-291, Asp-293, Asp-295, Gln-297, and Glu-302 each coordinate Ca(2+). EF-hand domains are found at residues 291–313 (DQDG…TVEN), 323–358 (WVKD…MNEY), and 359–394 (NALN…FTGS). At Thr-310 the chain carries Phosphothreonine. The Ca(2+) site is built by Asp-336, Asn-338, and Asp-340. Thr-344 carries the post-translational modification Phosphothreonine. Residues Glu-347, Asp-372, Asn-374, Asn-376, His-378, and Glu-383 each coordinate Ca(2+). The interval 354 to 407 (PMNEYNALNEAKQMIAVADENQNHHLEPEEVLKYSEFFTGSKLVDYARSVHEEF) is necessary for intracellular retention in Golgi apparatus lumen.

Belongs to the CREC family.

The protein resides in the golgi apparatus lumen. In terms of biological role, may regulate calcium-dependent activities in the endoplasmic reticulum lumen or post-ER compartment. The sequence is that of 45 kDa calcium-binding protein (SDF4) from Macaca fascicularis (Crab-eating macaque).